Consider the following 261-residue polypeptide: Glucose 1-dehydrogenase (261 aa).

NADP(+) is bound at residue 11 to 35; the sequence is AITGAASGLGKAMAIRFGKEQAKVV. S145 serves as a coordination point for substrate. Y158 serves as the catalytic Proton acceptor.

This sequence belongs to the short-chain dehydrogenases/reductases (SDR) family. In terms of assembly, homotetramer.

It catalyses the reaction D-glucose + NAD(+) = D-glucono-1,5-lactone + NADH + H(+). It carries out the reaction D-glucose + NADP(+) = D-glucono-1,5-lactone + NADPH + H(+). In Bacillus subtilis (strain 168), this protein is Glucose 1-dehydrogenase (gdh).